We begin with the raw amino-acid sequence, 271 residues long: Formamidopyrimidine-DNA glycosylase (271 aa).

Residue proline 2 is the Schiff-base intermediate with DNA of the active site. Catalysis depends on glutamate 3, which acts as the Proton donor. Catalysis depends on lysine 57, which acts as the Proton donor; for beta-elimination activity. Residues histidine 90, arginine 109, and lysine 151 each contribute to the DNA site. The segment at 236–270 (HVYGRGGETCTQCGNLLSEIRLGQRTTVFCSICQP) adopts an FPG-type zinc-finger fold. Arginine 260 functions as the Proton donor; for delta-elimination activity in the catalytic mechanism.

It belongs to the FPG family. In terms of assembly, monomer. Zn(2+) serves as cofactor.

The enzyme catalyses Hydrolysis of DNA containing ring-opened 7-methylguanine residues, releasing 2,6-diamino-4-hydroxy-5-(N-methyl)formamidopyrimidine.. It catalyses the reaction 2'-deoxyribonucleotide-(2'-deoxyribose 5'-phosphate)-2'-deoxyribonucleotide-DNA = a 3'-end 2'-deoxyribonucleotide-(2,3-dehydro-2,3-deoxyribose 5'-phosphate)-DNA + a 5'-end 5'-phospho-2'-deoxyribonucleoside-DNA + H(+). Its function is as follows. Involved in base excision repair of DNA damaged by oxidation or by mutagenic agents. Acts as a DNA glycosylase that recognizes and removes damaged bases. Has a preference for oxidized purines, such as 7,8-dihydro-8-oxoguanine (8-oxoG). Has AP (apurinic/apyrimidinic) lyase activity and introduces nicks in the DNA strand. Cleaves the DNA backbone by beta-delta elimination to generate a single-strand break at the site of the removed base with both 3'- and 5'-phosphates. This Shewanella oneidensis (strain ATCC 700550 / JCM 31522 / CIP 106686 / LMG 19005 / NCIMB 14063 / MR-1) protein is Formamidopyrimidine-DNA glycosylase.